We begin with the raw amino-acid sequence, 140 residues long: Large ribosomal subunit protein uL16 (140 aa).

Residues 1 to 14 are compositionally biased toward basic residues; the sequence is MLSPRRTKFRKQQR. Positions 1–22 are disordered; that stretch reads MLSPRRTKFRKQQRGRMEGAAT.

This sequence belongs to the universal ribosomal protein uL16 family. As to quaternary structure, part of the 50S ribosomal subunit.

Binds 23S rRNA and is also seen to make contacts with the A and possibly P site tRNAs. The protein is Large ribosomal subunit protein uL16 of Cyanothece sp. (strain PCC 7425 / ATCC 29141).